A 434-amino-acid polypeptide reads, in one-letter code: UDP-N-acetylglucosamine 1-carboxyvinyltransferase (434 aa).

34 to 35 (KN) is a phosphoenolpyruvate binding site. Residue arginine 104 coordinates UDP-N-acetyl-alpha-D-glucosamine. Cysteine 128 serves as the catalytic Proton donor. The residue at position 128 (cysteine 128) is a 2-(S-cysteinyl)pyruvic acid O-phosphothioketal. The UDP-N-acetyl-alpha-D-glucosamine site is built by aspartate 319 and isoleucine 341.

It belongs to the EPSP synthase family. MurA subfamily.

Its subcellular location is the cytoplasm. The catalysed reaction is phosphoenolpyruvate + UDP-N-acetyl-alpha-D-glucosamine = UDP-N-acetyl-3-O-(1-carboxyvinyl)-alpha-D-glucosamine + phosphate. It functions in the pathway cell wall biogenesis; peptidoglycan biosynthesis. Cell wall formation. Adds enolpyruvyl to UDP-N-acetylglucosamine. The chain is UDP-N-acetylglucosamine 1-carboxyvinyltransferase from Prochlorococcus marinus (strain MIT 9313).